Reading from the N-terminus, the 301-residue chain is Mating type protein mtA-1 (301 aa).

The segment at residues 49 to 104 (APKKKVNGFMGFRSYYSSLFSQFPQKARSPFMTILWQHDPFHNEWDFMCSVYSSIR) is a DNA-binding region (alpha box).

This sequence belongs to the MATALPHA1 family.

It is found in the nucleus. In terms of biological role, mating type proteins are sequence specific DNA-binding proteins that act as master switches in fungal differentiation by controlling gene expression in a cell type-specific fashion. Transcriptional activator that induces the transcription of alpha-specific genes. This is Mating type protein mtA-1 (MTA1) from Sordaria fimicola.